Reading from the N-terminus, the 105-residue chain is Malonate decarboxylase acyl carrier protein (105 aa).

S28 carries the post-translational modification O-(phosphoribosyl dephospho-coenzyme A)serine.

It belongs to the MdcC family. In terms of processing, covalently binds the prosthetic group of malonate decarboxylase.

The protein localises to the cytoplasm. Its function is as follows. Subunit of malonate decarboxylase, it is an acyl carrier protein to which acetyl and malonyl thioester residues are bound via a 2'-(5''-phosphoribosyl)-3'-dephospho-CoA prosthetic group and turn over during the catalytic mechanism. This Xanthomonas campestris pv. campestris (strain 8004) protein is Malonate decarboxylase acyl carrier protein.